Here is a 420-residue protein sequence, read N- to C-terminus: Deoxyribodipyrimidine photo-lyase (420 aa).

One can recognise a Photolyase/cryptochrome alpha/beta domain in the interval 2-124; sequence GPLLVWHRGD…PLHLLPAPHL (123 aa). The tract at residues 152 to 175 is disordered; that stretch reads APEALPKGPEEGEIPREDPGLPLP. A compositionally biased stretch (basic and acidic residues) spans 159–170; it reads GPEEGEIPREDP. Y197 serves as a coordination point for FAD. Position 201 (R201) interacts with DNA. 209-213 is a binding site for FAD; that stretch reads GSRLS. Interaction with DNA regions lie at residues 244–251 and 310–311; these read ELLWRDFS and NR. 341–343 serves as a coordination point for FAD; sequence DGD. Q373 serves as a coordination point for DNA.

This sequence belongs to the DNA photolyase class-1 family. Monomer. It depends on FAD as a cofactor.

It catalyses the reaction cyclobutadipyrimidine (in DNA) = 2 pyrimidine residues (in DNA).. Its function is as follows. Involved in repair of UV radiation-induced DNA damage. Catalyzes the light-dependent monomerization (300-600 nm) of cyclobutyl pyrimidine dimers (in cis-syn configuration), which are formed between adjacent bases on the same DNA strand upon exposure to ultraviolet radiation. This chain is Deoxyribodipyrimidine photo-lyase (phr), found in Thermus thermophilus (strain ATCC BAA-163 / DSM 7039 / HB27).